A 218-amino-acid polypeptide reads, in one-letter code: Protein GrpE (218 aa).

Residues M1–G75 are disordered. Basic and acidic residues predominate over residues S23–E40. Residues S48–G75 show a composition bias toward acidic residues.

It belongs to the GrpE family. Homodimer.

It is found in the cytoplasm. Functionally, participates actively in the response to hyperosmotic and heat shock by preventing the aggregation of stress-denatured proteins, in association with DnaK and GrpE. It is the nucleotide exchange factor for DnaK and may function as a thermosensor. Unfolded proteins bind initially to DnaJ; upon interaction with the DnaJ-bound protein, DnaK hydrolyzes its bound ATP, resulting in the formation of a stable complex. GrpE releases ADP from DnaK; ATP binding to DnaK triggers the release of the substrate protein, thus completing the reaction cycle. Several rounds of ATP-dependent interactions between DnaJ, DnaK and GrpE are required for fully efficient folding. This Corynebacterium glutamicum (strain ATCC 13032 / DSM 20300 / JCM 1318 / BCRC 11384 / CCUG 27702 / LMG 3730 / NBRC 12168 / NCIMB 10025 / NRRL B-2784 / 534) protein is Protein GrpE.